Reading from the N-terminus, the 212-residue chain is Thymidylate kinase (212 aa).

The residue at position 2 (Ala2) is an N-acetylalanine. Residues 16-21 and Arg97 contribute to the ATP site; that span reads RAGKTT. An LID region spans residues 133-157; it reads LQLQLLDAAARGEFGLERYETGTFQ. ATP contacts are provided by Lys182 and Arg192.

Belongs to the thymidylate kinase family. In terms of assembly, homodimer. Mg(2+) is required as a cofactor.

It carries out the reaction dTMP + ATP = dTDP + ADP. It functions in the pathway pyrimidine metabolism; dTTP biosynthesis. Its function is as follows. Catalyzes the phosphorylation of thymidine monophosphate (dTMP) to thymidine diphosphate (dTDP), the immediate precursor for the DNA building block dTTP, with ATP as the preferred phosphoryl donor in the presence of Mg(2+). The protein is Thymidylate kinase (Dtymk) of Mus musculus (Mouse).